Here is a 358-residue protein sequence, read N- to C-terminus: MSPSLVDNHAAAYIAAPSSAKAPMIQKPGNTFGMSSPIESKFLSQPRDLGIVAVGFSGGQCKPGVDAAPSALIESGLLTQLREELGYRLHGDDEVHLYTDLVPKEDPPHRNMKNPRAVSNVTKRIAEQVHSHAKEGRLVLTLGGDHSIAIGTIAGSAKAIKERLGREIAVIWVDAHADINTPETSGSGNIHGMPVSFLTGLASEDKEEFFGWLKPDHLLSVKKLVYIGLRDVDPGEKRILRENGIKAFSMHDIDKHGIGRVMEMALGHIGNDTPIHLSFDVDALDPMWAPSTGTPVRGGLTLREGDFICECVHETGSLVAVDLVEVNPTLAAPNDVGAHETVRAGCSLVRCALGESLL.

Residues H146, D174, H176, and D178 each coordinate Mn(2+). Residues H176–N180, S187–N189, and D233 each bind substrate. Positions 280 and 282 each coordinate Mn(2+). Residues T294 and E325 each coordinate substrate.

Belongs to the arginase family. As to quaternary structure, homohexamer. Mn(2+) serves as cofactor.

Its subcellular location is the cytoplasm. The catalysed reaction is L-arginine + H2O = urea + L-ornithine. The protein operates within nitrogen metabolism; urea cycle; L-ornithine and urea from L-arginine: step 1/1. The chain is Arginase (aga-1) from Neurospora crassa (strain ATCC 24698 / 74-OR23-1A / CBS 708.71 / DSM 1257 / FGSC 987).